A 144-amino-acid chain; its full sequence is Large ribosomal subunit protein uL15 (144 aa).

Positions 1–53 (MYLNTLAPAEGAKHSAKRLGRGIGSGLGKTGGRGHKGQKSRTGGGVRRGFEGG) are disordered. Residues 21 to 31 (RGIGSGLGKTG) show a composition bias toward gly residues.

It belongs to the universal ribosomal protein uL15 family. In terms of assembly, part of the 50S ribosomal subunit.

Functionally, binds to the 23S rRNA. The polypeptide is Large ribosomal subunit protein uL15 (Mannheimia succiniciproducens (strain KCTC 0769BP / MBEL55E)).